We begin with the raw amino-acid sequence, 160 residues long: Cytochrome b6-f complex subunit 4 (160 aa).

The next 3 membrane-spanning stretches (helical) occupy residues 36–56 (LLYIFPVVIVGTIALCVGLAV), 95–115 (LLGIVAMASIPLGLMLVPFIE), and 131–151 (AVFLFGTAVTLWLGIGATLPI).

Belongs to the cytochrome b family. PetD subfamily. The 4 large subunits of the cytochrome b6-f complex are cytochrome b6, subunit IV (17 kDa polypeptide, PetD), cytochrome f and the Rieske protein, while the 4 small subunits are PetG, PetL, PetM and PetN. The complex functions as a dimer.

It localises to the cellular thylakoid membrane. In terms of biological role, component of the cytochrome b6-f complex, which mediates electron transfer between photosystem II (PSII) and photosystem I (PSI), cyclic electron flow around PSI, and state transitions. This is Cytochrome b6-f complex subunit 4 from Trichodesmium erythraeum (strain IMS101).